Reading from the N-terminus, the 696-residue chain is Probable E3 ubiquitin ligase complex SCF subunit sconB (696 aa).

Positions 1–12 (MDAHELSFRDGH) are enriched in basic and acidic residues. The segment at 1-72 (MDAHELSFRD…HSFNTQKPIR (72 aa)) is disordered. A compositionally biased stretch (polar residues) spans 55 to 69 (PGSTQDKPHSFNTQK). Positions 193–239 (IDFLTALPPEISFKILCYLDTTSLCKAAQVSRRWRALADDDVVWHRM) constitute an F-box domain. A disordered region spans residues 290-314 (SATIETAAAGSKRKPESGKEDTAMV). Residues 302 to 313 (RKPESGKEDTAM) are compositionally biased toward basic and acidic residues. WD repeat units follow at residues 365–402 (GHSNGIMCLQFEDNILATGSYDATIKIWDTETGEELRT), 405–444 (GHQSGIRCLQFDDTKLISGSMDHTLKVWNWRTGECISTYS), 446–482 (HRGGVVGLHFDATILASGSVDKTVKIWNFEDKSTCLL), 484–525 (GHTD…RTFH), 579–622 (DTPS…CLRT), 623–662 (FFGHLEGVWALAADTLRIVSGAEDRMVKIWDPRTGKCERT), and 665–696 (GHSGPVTCIGLGDSRFATGSEDCEVRMYSFQT). Positions 554–596 (NVSVTSGDSPAASPQALPGFDGQTSDTPSSAFGPAFDDGRPSP) are disordered.

This sequence belongs to the WD repeat MET30/SCONB/SCON-2 family. As to quaternary structure, component of the SCF(sconB) E3 ubiquitin ligase complex.

The protein operates within protein modification; protein ubiquitination. Component of the SCF(sconB) E3 ubiquitin ligase complex involved in the regulation of sulfur metabolite repression, probably by mediating the inactivation or degradation of the metR transcription factor. The chain is Probable E3 ubiquitin ligase complex SCF subunit sconB (sconB) from Aspergillus fumigatus (strain ATCC MYA-4609 / CBS 101355 / FGSC A1100 / Af293) (Neosartorya fumigata).